Consider the following 197-residue polypeptide: uncharacterized protein (197 aa).

One can recognise a PfpI endopeptidase domain in the interval 29 to 166 (DWSVHTVSLD…FTNLILEMID (138 aa)). Catalysis depends on Cys98, which acts as the Nucleophile.

The protein belongs to the peptidase C56 family.

This is an uncharacterized protein from Bacillus subtilis (strain 168).